The chain runs to 188 residues: UPF0301 protein Mmwyl1_0539 (188 aa).

Belongs to the UPF0301 (AlgH) family.

The sequence is that of UPF0301 protein Mmwyl1_0539 from Marinomonas sp. (strain MWYL1).